A 421-amino-acid polypeptide reads, in one-letter code: Imidazolonepropionase (421 aa).

2 residues coordinate Fe(3+): histidine 81 and histidine 83. Positions 81 and 83 each coordinate Zn(2+). 3 residues coordinate 4-imidazolone-5-propanoate: arginine 90, tyrosine 153, and histidine 186. Tyrosine 153 is an N-formimidoyl-L-glutamate binding site. Histidine 251 is a binding site for Fe(3+). Zn(2+) is bound at residue histidine 251. Glutamate 254 contacts 4-imidazolone-5-propanoate. Aspartate 326 provides a ligand contact to Fe(3+). A Zn(2+)-binding site is contributed by aspartate 326. 2 residues coordinate N-formimidoyl-L-glutamate: asparagine 328 and glycine 330. Serine 331 serves as a coordination point for 4-imidazolone-5-propanoate.

This sequence belongs to the metallo-dependent hydrolases superfamily. HutI family. The cofactor is Zn(2+). Fe(3+) serves as cofactor.

Its subcellular location is the cytoplasm. It carries out the reaction 4-imidazolone-5-propanoate + H2O = N-formimidoyl-L-glutamate. Its pathway is amino-acid degradation; L-histidine degradation into L-glutamate; N-formimidoyl-L-glutamate from L-histidine: step 3/3. Functionally, catalyzes the hydrolytic cleavage of the carbon-nitrogen bond in imidazolone-5-propanoate to yield N-formimidoyl-L-glutamate. It is the third step in the universal histidine degradation pathway. The polypeptide is Imidazolonepropionase (Streptococcus pyogenes serotype M1).